Reading from the N-terminus, the 270-residue chain is MGFWCRMSENQEQEEVITVRVQDPRVQNEGSWNSYVDYKIFLHTNSKAFTAKTSCVRRRYREFVWLRKQLQRNAGLVPVPELPGKSTFFGTSDEFIEKRRQGLQHFLEKVLQSVVLLSDSQLHLFLQSQLSVPEIEACVQGRSTMTVSDAILRYAMSNCGWAQEERQSSSHLAKGDQPKSCCFLPRSGRRSSPSPPPSEEKDHLEVWAPVVDSEVPSLESPTLPPLSSPLCCDFGRPKEGTSTLQSVRRAVGGDHAVPLDPGQLETVLEK.

Residues 16 to 132 (VITVRVQDPR…HLFLQSQLSV (117 aa)) form the PX domain. Residues Arg59, Lys85, and Arg99 each contribute to the a 1,2-diacyl-sn-glycero-3-phospho-(1D-myo-inositol-3-phosphate) site. The tract at residues 135 to 139 (IEACV) is important for membrane trafficking. Positions 168–177 (SSSHLAKGDQ) are enriched in basic and acidic residues. Residues 168–203 (SSSHLAKGDQPKSCCFLPRSGRRSSPSPPPSEEKDH) form a disordered region.

This sequence belongs to the sorting nexin family. As to quaternary structure, monomer. Interacts with TRPV3; this interaction promotes TRPV3 trafficking from the cell membrane to lysosome for degradation.

It localises to the cell membrane. Its subcellular location is the endosome. The protein resides in the cytoplasm. Its function is as follows. Phosphoinositide-binding protein involved in protein sorting and membrane trafficking in endosomes. Regulates the levels of TRPV3 by promoting its trafficking from the cell membrane to lysosome for degradation. The chain is Sorting nexin-11 (SNX11) from Homo sapiens (Human).